The sequence spans 71 residues: Small ribosomal subunit protein bS21 (71 aa).

This sequence belongs to the bacterial ribosomal protein bS21 family.

This Alteromonas mediterranea (strain DSM 17117 / CIP 110805 / LMG 28347 / Deep ecotype) protein is Small ribosomal subunit protein bS21.